We begin with the raw amino-acid sequence, 163 residues long: Putative 4-hydroxy-4-methyl-2-oxoglutarate aldolase (163 aa).

Substrate-binding positions include 76–79 and Arg-98; that span reads GDML. Asp-99 lines the a divalent metal cation pocket.

The protein belongs to the class II aldolase/RraA-like family. As to quaternary structure, homotrimer. It depends on a divalent metal cation as a cofactor.

The enzyme catalyses 4-hydroxy-4-methyl-2-oxoglutarate = 2 pyruvate. It catalyses the reaction oxaloacetate + H(+) = pyruvate + CO2. Catalyzes the aldol cleavage of 4-hydroxy-4-methyl-2-oxoglutarate (HMG) into 2 molecules of pyruvate. Also contains a secondary oxaloacetate (OAA) decarboxylase activity due to the common pyruvate enolate transition state formed following C-C bond cleavage in the retro-aldol and decarboxylation reactions. This is Putative 4-hydroxy-4-methyl-2-oxoglutarate aldolase from Pseudomonas putida (strain W619).